The sequence spans 384 residues: Transcription factor iacI (384 aa).

The protein resides in the nucleus. Its function is as follows. Transcription factor; part of the gene cluster that mediates the biosynthesis of iso-A82775C, a enylepoxycyclohexane and biosynthetic precursor of the chloropestolide anticancer natural products. This is Transcription factor iacI from Pestalotiopsis fici (strain W106-1 / CGMCC3.15140).